The chain runs to 486 residues: N-succinylglutamate 5-semialdehyde dehydrogenase (486 aa).

220–225 contributes to the NAD(+) binding site; sequence GSSRTG. Catalysis depends on residues glutamate 243 and cysteine 277.

This sequence belongs to the aldehyde dehydrogenase family. AstD subfamily.

It carries out the reaction N-succinyl-L-glutamate 5-semialdehyde + NAD(+) + H2O = N-succinyl-L-glutamate + NADH + 2 H(+). The protein operates within amino-acid degradation; L-arginine degradation via AST pathway; L-glutamate and succinate from L-arginine: step 4/5. Catalyzes the NAD-dependent reduction of succinylglutamate semialdehyde into succinylglutamate. This Shewanella sediminis (strain HAW-EB3) protein is N-succinylglutamate 5-semialdehyde dehydrogenase.